The sequence spans 493 residues: Cardiolipin synthase 1 (493 aa).

2 consecutive transmembrane segments (helical) span residues 13 to 33 (FTII…IIIF) and 45 to 65 (WAWL…YLFF). 2 PLD phosphodiesterase domains span residues 228 to 255 (MNNR…GDEY) and 406 to 433 (ENGF…DFRS). Active-site residues include histidine 233, lysine 235, aspartate 240, histidine 411, lysine 413, and aspartate 418.

This sequence belongs to the phospholipase D family. Cardiolipin synthase subfamily.

The protein resides in the cell membrane. It catalyses the reaction 2 a 1,2-diacyl-sn-glycero-3-phospho-(1'-sn-glycerol) = a cardiolipin + glycerol. Its function is as follows. Catalyzes the reversible phosphatidyl group transfer from one phosphatidylglycerol molecule to another to form cardiolipin (CL) (diphosphatidylglycerol) and glycerol. This is Cardiolipin synthase 1 (cls1) from Staphylococcus aureus (strain COL).